An 840-amino-acid polypeptide reads, in one-letter code: Subtilisin-like protease SBT2.3 (840 aa).

The N-terminal stretch at 1 to 27 (MVRVMLVRFGFLLLMISFVFLSNNTLG) is a signal peptide. Residues 28 to 146 (QQQDDDDDSA…IVLDYSVRTA (119 aa)) constitute a propeptide, activation peptide. Positions 38–146 (VYIVTLKQPP…IVLDYSVRTA (109 aa)) constitute an Inhibitor I9 domain. Basic residues predominate over residues 61 to 81 (KSKFTPKLRPRNNSRKRHGKS). Residues 61–85 (KSKFTPKLRPRNNSRKRHGKSKIPS) form a disordered region. The N-linked (GlcNAc...) asparagine glycan is linked to Asn-72. In terms of domain architecture, Peptidase S8 spans 148–694 (TYTPQFMGLP…SGFVNATAAL (547 aa)). The Charge relay system role is filled by Asp-180. N-linked (GlcNAc...) asparagine glycans are attached at residues Asn-193 and Asn-241. His-255 acts as the Charge relay system in catalysis. N-linked (GlcNAc...) asparagine glycosylation is found at Asn-398, Asn-427, Asn-480, Asn-525, and Asn-553. One can recognise a PA domain in the interval 418 to 513 (MISAFHALNN…MDMPGIIIPS (96 aa)). Ser-619 functions as the Charge relay system in the catalytic mechanism. Residues Asn-689, Asn-715, Asn-723, Asn-767, and Asn-808 are each glycosylated (N-linked (GlcNAc...) asparagine).

Belongs to the peptidase S8 family.

It is found in the secreted. The chain is Subtilisin-like protease SBT2.3 from Arabidopsis thaliana (Mouse-ear cress).